We begin with the raw amino-acid sequence, 633 residues long: Shootin-1 (633 aa).

The residue at position 1 (Met1) is an N-acetylmethionine. Ser3 and Ser4 each carry phosphoserine. Residues 7–353 adopt a coiled-coil conformation; it reads EKQLQLITSL…RVNQSENSVP (347 aa). Phosphoserine; by PAK1 is present on residues Ser101 and Ser249. The tract at residues 343–508 is disordered; that stretch reads KRVNQSENSV…LATSESKSMP (166 aa). Pro residues predominate over residues 352 to 369; the sequence is VPPPPPPPPPLPPPPPNP. Ser375 is subject to Phosphoserine. Residues 403-418 are compositionally biased toward basic and acidic residues; that stretch reads TDLKRQAVEEMMDRIK. Over residues 456–465 the composition is skewed to polar residues; sequence LNKSTSSRSL. Residue Ser473 is modified to Phosphoserine. Phosphothreonine is present on Thr487. A compositionally biased stretch (polar residues) spans 490–505; that stretch reads ADSSSPTGILATSESK. At Ser494 the chain carries Phosphoserine. Thr496 is modified (phosphothreonine). Ser506 and Ser515 each carry phosphoserine. A disordered region spans residues 525 to 633; that stretch reads TLEAEFNNPC…KTGETDSSNC (109 aa). Residue Thr537 is modified to Phosphothreonine. The span at 550–559 shows a compositional bias: polar residues; it reads CTNSKVTFQP. Residues 590–621 are compositionally biased toward basic and acidic residues; sequence PQTKDQAAEKDPTQCKEEERGETQPEFKEDSS.

Belongs to the shootin family. In terms of assembly, interacts with PFN2. Interacts (via N-terminus) with KIF20B; this interaction is direct and promotes the association of SHTN1 to microtubules in primary neurons. Associates with microtubule. Interacts with L1CAM; this interaction occurs in axonal growth cones. Interacts with actin filament retrograde flow; this interaction is enhanced in a netrin-1- and PAK1-dependent manner and promotes F-actin-substrate coupling and concomitant formation of traction forces at axonal growth cones. Interacts with RUFY3. Post-translationally, phosphorylated on Ser-101 and Ser-249 by PAK1 through a CDC42- and RAC1-dependent signaling pathway, which enhances its association with F-actin retrograde flow in filopodia and lamellipodia of axonal growth cones. Phosphorylation on Ser-101 and Ser-249 is increased by netrin-1. In terms of tissue distribution, brain-specific (at protein level). Expressed in hippocampal neurons.

Its subcellular location is the perikaryon. The protein resides in the cell projection. It localises to the axon. It is found in the growth cone. The protein localises to the cytoplasm. Its subcellular location is the cytoskeleton. The protein resides in the filopodium. It localises to the lamellipodium. Functionally, involved in the generation of internal asymmetric signals required for neuronal polarization and neurite outgrowth. Mediates netrin-1-induced F-actin-substrate coupling or 'clutch engagement' within the axon growth cone through activation of CDC42, RAC1 and PAK1-dependent signaling pathway, thereby converting the F-actin retrograde flow into traction forces, concomitantly with filopodium extension and axon outgrowth. Plays a role in cytoskeletal organization by regulating the subcellular localization of phosphoinositide 3-kinase (PI3K) activity at the axonal growth cone. Also plays a role in regenerative neurite outgrowth. In the developing cortex, cooperates with KIF20B to promote both the transition from the multipolar to the bipolar stage and the radial migration of cortical neurons from the ventricular zone toward the superficial layer of the neocortex. Involved in the accumulation of phosphatidylinositol 3,4,5-trisphosphate (PIP3) in the growth cone of primary hippocampal neurons. The chain is Shootin-1 from Rattus norvegicus (Rat).